The primary structure comprises 426 residues: Histidine--tRNA ligase (426 aa).

The protein belongs to the class-II aminoacyl-tRNA synthetase family. In terms of assembly, homodimer.

It is found in the cytoplasm. It catalyses the reaction tRNA(His) + L-histidine + ATP = L-histidyl-tRNA(His) + AMP + diphosphate + H(+). The polypeptide is Histidine--tRNA ligase (Malacoplasma penetrans (strain HF-2) (Mycoplasma penetrans)).